We begin with the raw amino-acid sequence, 176 residues long: R-phycoerythrin beta chain (176 aa).

Phycourobilin-binding residues include Cys50 and Cys61. Asn72 is modified (N4-methylasparagine). The (2R,3E)-phycoerythrobilin site is built by Cys82 and Cys158.

It belongs to the phycobiliprotein family. As to quaternary structure, heterodimer of an alpha and a beta chain. Post-translationally, contains two covalently linked phycoerythrobilin chromophores and one covalently linked phycourobilin chromophore.

It is found in the plastid. The protein resides in the chloroplast thylakoid membrane. Light-harvesting photosynthetic bile pigment-protein from the phycobiliprotein complex. The sequence is that of R-phycoerythrin beta chain (cpeB) from Aglaothamnion neglectum (Red alga).